Here is a 341-residue protein sequence, read N- to C-terminus: Methionine import ATP-binding protein MetN (341 aa).

An ABC transporter domain is found at 2–237; the sequence is IELCGLKKSF…PESLARKMLY (236 aa). 34–41 is an ATP binding site; that stretch reads GKSGAGKS.

Belongs to the ABC transporter superfamily. Methionine importer (TC 3.A.1.24) family. The complex is composed of two ATP-binding proteins (MetN), two transmembrane proteins (MetI) and a solute-binding protein (MetQ).

The protein localises to the cell inner membrane. It catalyses the reaction L-methionine(out) + ATP + H2O = L-methionine(in) + ADP + phosphate + H(+). It carries out the reaction D-methionine(out) + ATP + H2O = D-methionine(in) + ADP + phosphate + H(+). In terms of biological role, part of the ABC transporter complex MetNIQ involved in methionine import. Responsible for energy coupling to the transport system. The sequence is that of Methionine import ATP-binding protein MetN from Legionella pneumophila (strain Paris).